A 270-amino-acid polypeptide reads, in one-letter code: 5-amino-6-(5-phospho-D-ribitylamino)uracil phosphatase YitU (270 aa).

The Nucleophile role is filled by Asp-11. Asp-11 provides a ligand contact to Mg(2+). Leu-12 provides a ligand contact to phosphate. Asp-13 serves as a coordination point for Mg(2+). Residues Thr-45–Gly-46 and Lys-197 each bind phosphate. Asp-220 contributes to the Mg(2+) binding site. Phosphate is bound at residue Asn-223.

The protein belongs to the HAD-like hydrolase superfamily. Cof family. It depends on Mg(2+) as a cofactor.

The enzyme catalyses 5-amino-6-(5-phospho-D-ribitylamino)uracil + H2O = 5-amino-6-(D-ribitylamino)uracil + phosphate. The protein operates within cofactor biosynthesis; riboflavin biosynthesis; 5-amino-6-(D-ribitylamino)uracil from GTP: step 4/4. Its function is as follows. Catalyzes the dephosphorylation of the riboflavin precursor 5-amino-6-(5-phospho-D-ribitylamino)uracil and of flavin mononucleotide (FMN) in vitro. The polypeptide is 5-amino-6-(5-phospho-D-ribitylamino)uracil phosphatase YitU (yitU) (Bacillus subtilis (strain 168)).